Here is a 271-residue protein sequence, read N- to C-terminus: Probable ribosome biogenesis GTPase A (271 aa).

One can recognise a CP-type G domain in the interval H21–K175. Residues N127–S132 and G171 each bind GTP.

This sequence belongs to the TRAFAC class YlqF/YawG GTPase family. MTG1 subfamily.

The protein localises to the cytoplasm. Required for a late step of 50S ribosomal subunit assembly. Has GTPase activity. Binds to the 23S rRNA. This chain is Probable ribosome biogenesis GTPase A (rbgA), found in Mycoplasma pneumoniae (strain ATCC 29342 / M129 / Subtype 1) (Mycoplasmoides pneumoniae).